Here is a 95-residue protein sequence, read N- to C-terminus: Large ribosomal subunit protein uL23c (95 aa).

The protein belongs to the universal ribosomal protein uL23 family. In terms of assembly, part of the 50S ribosomal subunit.

It localises to the plastid. Its subcellular location is the chloroplast. Binds to 23S rRNA. This chain is Large ribosomal subunit protein uL23c (rpl23), found in Chlamydomonas reinhardtii (Chlamydomonas smithii).